A 1044-amino-acid polypeptide reads, in one-letter code: Ras GTPase-activating protein 1 (1044 aa).

At Met1 the chain carries N-acetylmethionine. Residues Met1 to Glu160 are hydrophobic. One can recognise an SH2 1 domain in the interval Trp178 to Val269. Positions Glu276–Arg338 constitute an SH3 domain. An SH2 2 domain is found at Trp348 to Val438. In terms of domain architecture, PH spans Asn471–Asn574. One can recognise a C2 domain in the interval Asn574–Phe687. At Tyr612 the chain carries Phosphotyrosine. Repeats lie at residues Pro646–Asp664 and Pro665–Thr683. A Ras-GAP domain is found at Lys761 to Leu971. Ser828 is modified (phosphoserine).

Interacts with SQSTM1. Interacts with SPSB1; the interaction does not promote degradation. Interacts with CAV2 (tyrosine phosphorylated form). Directly interacts with NCK1. Interacts with PDGFRB (tyrosine phosphorylated). Interacts (via SH2 domain) with the 'Tyr-9' phosphorylated form of PDPK1. Interacts with tyrosine-phosphorylated EPHB4. Post-translationally, phosphorylated by SRC and LCK. The phosphorylation SRC inhibits its ability to stimulate the Ras-GTPase activity, whereas phosphorylation by LCK does not display any effect on stimulation activity.

It localises to the cytoplasm. In terms of biological role, inhibitory regulator of the Ras-cyclic AMP pathway. Stimulates the GTPase of normal but not oncogenic Ras p21. The sequence is that of Ras GTPase-activating protein 1 (RASA1) from Bos taurus (Bovine).